The following is a 150-amino-acid chain: Large ribosomal subunit protein bL9 (150 aa).

Belongs to the bacterial ribosomal protein bL9 family.

In terms of biological role, binds to the 23S rRNA. The polypeptide is Large ribosomal subunit protein bL9 (Burkholderia multivorans (strain ATCC 17616 / 249)).